A 958-amino-acid chain; its full sequence is Transcription factor PfmaH (958 aa).

Residues 44–70 (CLNCSQAKTGCNKEVPCQRCQDKGLHC) constitute a DNA-binding region (zn(2)-C6 fungal-type). Residues 272–301 (EFAGSPSGVSPFGDLSTSNSEPSSSSWGSS) form a disordered region. Over residues 287 to 301 (STSNSEPSSSSWGSS) the composition is skewed to low complexity.

The protein resides in the nucleus. In terms of biological role, transcription factor; part of the gene cluster that mediates the biosynthesis of dihydroxynaphthalene (DHN)-melanin, a bluish-green pigment forming a dark layer in the conidial wall that protects the conidia from UV radiations. The 2 transcription factors present in the cluster, PfmaF and PfmaH, coordinately regulate DHN-melanin production. PfmaH acts as a pathway specific regulator to mediate the expression of Pfma cluster genes including PfmaJ, leading to DHN-melanin production in conidia, and regulates the conidial formation. The protein is Transcription factor PfmaH (PfmaH) of Pestalotiopsis fici (strain W106-1 / CGMCC3.15140).